The chain runs to 380 residues: E3 ubiquitin-protein ligase Iruka (380 aa).

The tract at residues 50-92 (APEMDSSTAGASGSARSGSSGSGSSGSHDTLSRGSSSSGSQVN) is disordered. Low complexity-rich tracts occupy residues 55–68 (SSTAGASGSARSGS) and 74–89 (SGSHDTLSRGSSSSGS). An RING-type; atypical zinc finger spans residues 253 to 294 (CSICWDDFKIDETVRKLPCSHLYHENCIVPWLNLHSTCPICR). A disordered region spans residues 317 to 367 (EMAADGSNSERRSASTATGTDNPSPANNPSQAAAEGGRTRPDANPAQAARN). Residues 338–350 (NPSPANNPSQAAA) show a composition bias toward low complexity.

As to quaternary structure, interacts (via N-terminus) with CG7546 (via Ubl domain).

It catalyses the reaction S-ubiquitinyl-[E2 ubiquitin-conjugating enzyme]-L-cysteine + [acceptor protein]-L-lysine = [E2 ubiquitin-conjugating enzyme]-L-cysteine + N(6)-ubiquitinyl-[acceptor protein]-L-lysine.. It functions in the pathway protein modification; protein ubiquitination. Functionally, E3 ubiquitin-protein ligase that mediates E2-dependent, 'Lys-48'- and/or 'Lys-63'-linked polyubiquitination of substrates. Recognizes miRNA-empty Ago1 and triggers its degradation via polyubiquitination independently of the Bag6 complex. By targeting miRNA-empty Ago1, eliminates dysfunctional Ago1 not able to bind miRNA and thereby plays a role in the quality control of miRNA-mediated silencing. This is E3 ubiquitin-protein ligase Iruka from Drosophila melanogaster (Fruit fly).